Consider the following 820-residue polypeptide: TORTIFOLIA1-like protein 2 (820 aa).

HEAT repeat units follow at residues 61-98 (DKVS…FHEG), 102-139 (PYLG…KMSC), 146-183 (GVFV…SSPE), 187-224 (AIIQ…AGGA), and 228-265 (SVLS…TGEK). Positions 304 to 321 (PGSDSPEPSETESSVKES) are enriched in low complexity. Disordered regions lie at residues 304–325 (PGSD…YNGA), 357–377 (PVSA…SNQD), and 584–644 (GSTI…GKTG). A compositionally biased stretch (basic and acidic residues) spans 367–377 (YNDDPRKSNQD). The segment covering 584–613 (GSTISPRLSSCTSRTSTDIRNRQSTLSTSK) has biased composition (polar residues).

The chain is TORTIFOLIA1-like protein 2 from Arabidopsis thaliana (Mouse-ear cress).